A 714-amino-acid chain; its full sequence is Fatty acid oxidation complex subunit alpha (714 aa).

An enoyl-CoA hydratase region spans residues 1–190 (MEMASAFTLN…KLGLVDDVVP (190 aa)). Residues 306–714 (APLNSVGILG…FWKTTATDLQ (409 aa)) are 3-hydroxyacyl-CoA dehydrogenase.

This sequence in the N-terminal section; belongs to the enoyl-CoA hydratase/isomerase family. It in the central section; belongs to the 3-hydroxyacyl-CoA dehydrogenase family. In terms of assembly, heterotetramer of two alpha chains (FadJ) and two beta chains (FadI).

The protein resides in the cytoplasm. It carries out the reaction a (3S)-3-hydroxyacyl-CoA = a (2E)-enoyl-CoA + H2O. The enzyme catalyses a 4-saturated-(3S)-3-hydroxyacyl-CoA = a (3E)-enoyl-CoA + H2O. It catalyses the reaction a (3S)-3-hydroxyacyl-CoA + NAD(+) = a 3-oxoacyl-CoA + NADH + H(+). The catalysed reaction is (3S)-3-hydroxybutanoyl-CoA = (3R)-3-hydroxybutanoyl-CoA. It functions in the pathway lipid metabolism; fatty acid beta-oxidation. Its function is as follows. Catalyzes the formation of a hydroxyacyl-CoA by addition of water on enoyl-CoA. Also exhibits 3-hydroxyacyl-CoA epimerase and 3-hydroxyacyl-CoA dehydrogenase activities. The sequence is that of Fatty acid oxidation complex subunit alpha from Escherichia coli (strain SMS-3-5 / SECEC).